Consider the following 61-residue polypeptide: Small ribosomal subunit protein bS21 (61 aa).

It belongs to the bacterial ribosomal protein bS21 family.

This Methylacidiphilum infernorum (isolate V4) (Methylokorus infernorum (strain V4)) protein is Small ribosomal subunit protein bS21.